A 186-amino-acid polypeptide reads, in one-letter code: Elongation factor P (186 aa).

This sequence belongs to the elongation factor P family.

It localises to the cytoplasm. It functions in the pathway protein biosynthesis; polypeptide chain elongation. Involved in peptide bond synthesis. Stimulates efficient translation and peptide-bond synthesis on native or reconstituted 70S ribosomes in vitro. Probably functions indirectly by altering the affinity of the ribosome for aminoacyl-tRNA, thus increasing their reactivity as acceptors for peptidyl transferase. This chain is Elongation factor P, found in Coprothermobacter proteolyticus (strain ATCC 35245 / DSM 5265 / OCM 4 / BT).